We begin with the raw amino-acid sequence, 173 residues long: NADH-ubiquinone oxidoreductase chain 6 (173 aa).

Helical transmembrane passes span 1–21 (MTYF…AVAS), 27–47 (YGVV…LSLG), 48–68 (VSFV…VVFV), 87–107 (VVGY…VGGF), 113–133 (FGVI…FGGV), and 139–159 (CGVG…FVVL).

Belongs to the complex I subunit 6 family.

Its subcellular location is the mitochondrion membrane. It catalyses the reaction a ubiquinone + NADH + 5 H(+)(in) = a ubiquinol + NAD(+) + 4 H(+)(out). Its function is as follows. Core subunit of the mitochondrial membrane respiratory chain NADH dehydrogenase (Complex I) that is believed to belong to the minimal assembly required for catalysis. Complex I functions in the transfer of electrons from NADH to the respiratory chain. The immediate electron acceptor for the enzyme is believed to be ubiquinone. This Alle alle (Dovekie) protein is NADH-ubiquinone oxidoreductase chain 6 (MT-ND6).